We begin with the raw amino-acid sequence, 431 residues long: Citrate synthase 1 (431 aa).

Catalysis depends on residues H309 and D366.

The protein belongs to the citrate synthase family. Homohexamer.

The enzyme catalyses oxaloacetate + acetyl-CoA + H2O = citrate + CoA + H(+). Its pathway is carbohydrate metabolism; tricarboxylic acid cycle; isocitrate from oxaloacetate: step 1/2. The protein is Citrate synthase 1 (gltA2) of Mycobacterium tuberculosis (strain CDC 1551 / Oshkosh).